The chain runs to 445 residues: Trigger factor (445 aa).

The PPIase FKBP-type domain maps to 162–247 (GDQVTIDAIG…IKAVHTAEPT (86 aa)).

This sequence belongs to the FKBP-type PPIase family. Tig subfamily.

The protein resides in the cytoplasm. The enzyme catalyses [protein]-peptidylproline (omega=180) = [protein]-peptidylproline (omega=0). Involved in protein export. Acts as a chaperone by maintaining the newly synthesized protein in an open conformation. Functions as a peptidyl-prolyl cis-trans isomerase. This chain is Trigger factor (tig), found in Rickettsia prowazekii (strain Madrid E).